The primary structure comprises 337 residues: Diacylglycerol O-acyltransferase 2-like protein 6 (337 aa).

2 helical membrane passes run 22–42 (IPVY…LLLF) and 102–122 (YIIL…NFAT).

Belongs to the diacylglycerol acyltransferase family.

The protein resides in the endoplasmic reticulum membrane. It catalyses the reaction 1,2-di-(9Z-octadecenoyl)-sn-glycerol + (9Z)-octadecenoyl-CoA = 1,2,3-tri-(9Z-octadecenoyl)-glycerol + CoA. In terms of biological role, diglyceride acyltransferase that uses fatty acyl-CoA as substrate. Particularly active with oleate as a substrate. Has no wax synthase activity to produce wax esters. This Mus musculus (Mouse) protein is Diacylglycerol O-acyltransferase 2-like protein 6 (Dgat2l6).